The chain runs to 1096 residues: MPPNFFQKPETALKRAHELISVGKEMDALETLHDTIKSKRHKQWTKTHEAIMLKHMELCVSLRRPHMAKDALFQYKTLTQQVAIKSLETVIQRFLELAQQKTEEAQKTSIEKVEEIDDLDQADAPENLLLSAVSGDAAQDRMDRTVLSPWLRFLWDSYRNCLDLLRNTAVVEQLYHRIARQSFEFCAKYQRRTEFRKLCDNLRLHLTQIQKHQHLAHVVKLTSAESLTLMQDTRLIQLDTAIQMELWQEAYRSAEDVHGMMQLSKDKDERMVKPASYVNYYDKLALVFWKAGNRLFHAAALLQKYIIYKDMKKTFSMEEAMDQATRVLLATLAIPDGADNPSDLTRHLDIEEQHIANMRLLSNLLRLPVAPTRAGILKEITRLNLPDVAVESARTLYRLLECNFAPLRLASQIQAELTKVTELNRAEYNQYVEALKGVTATKIIKQISVIYDTLSIGRIQKVIPFYNGDELERFLVDIAKHRYVKARIDHRGGSIHFGAADAALSGFFDLEVSDGFGGEAEQVAVEDIRNHLQSMYNNLRDAVQVLDYEKIKRAATDDLKRHAEIYLYHKDADYERILLRRKKIESYKETSERQKLEKCQQAQAEANRKEEQRRAEEMRRLEQENIEKEKLRRLAEQEEIDRKVRAEKMKKIQATPIYQAIVKDHGEEAFQNMDPDSVLREQRDRLDEQRREQQARLQQQEKKFDHLIRAYHLQEMVARKAISDNFAVKAPQNHDSYEKRRVENAIKDHENAVAVYERMQKVRKDPDAAAFLESVKKARADDFNKKIRGFGRRNCVMRNENVLKNRHELPKEGAEERMASAREVAEQTRRDEQEKERRAVRESQRPSKREIVENSEMDSDWRKSAQPTQPRTISSKPFGERFVEGERYRESGAVTASEADSGPWVRGNVTGSQRQQDVPIRNIERPAVPSRFSNREQARGEADSTTNWRKGQVAQRDRDQSVGKQPLMEKRGEPSGAQLHDVKAVATPSPADAGPWRRGMIVARDQADSSQRTSAATPTTQPWRPSRLRQADGAPVNGAPSGRILEGSGSNEPSIGKWNRSIQRTGDSHGAQSFRGISQHQQRRGAADDDRNWRQK.

A PCI domain is found at 323 to 502; that stretch reads QATRVLLATL…GSIHFGAADA (180 aa). 3 coiled-coil regions span residues 591-643, 677-761, and 811-839; these read SERQ…IDRK, SVLR…RMQK, and KEGA…ERRA. The segment covering 808-852 has biased composition (basic and acidic residues); the sequence is ELPKEGAEERMASAREVAEQTRRDEQEKERRAVRESQRPSKREIV. The tract at residues 808–1096 is disordered; it reads ELPKEGAEER…ADDDRNWRQK (289 aa). Residues 865-875 show a composition bias toward polar residues; sequence AQPTQPRTISS. 3 stretches are compositionally biased toward basic and acidic residues: residues 878–890, 933–942, and 955–973; these read FGER…RYRE, SNREQARGEA, and QRDR…KRGE. Polar residues predominate over residues 1008–1023; that stretch reads DSSQRTSAATPTTQPW. Over residues 1085–1096 the composition is skewed to basic and acidic residues; the sequence is GAADDDRNWRQK.

The protein belongs to the eIF-3 subunit A family. Component of the eukaryotic translation initiation factor 3 (eIF-3) complex.

The protein resides in the cytoplasm. Functionally, RNA-binding component of the eukaryotic translation initiation factor 3 (eIF-3) complex, which is involved in protein synthesis of a specialized repertoire of mRNAs and, together with other initiation factors, stimulates binding of mRNA and methionyl-tRNAi to the 40S ribosome. The eIF-3 complex specifically targets and initiates translation of a subset of mRNAs involved in cell proliferation. The protein is Eukaryotic translation initiation factor 3 subunit A of Brugia malayi (Filarial nematode worm).